A 469-amino-acid chain; its full sequence is RNA-editing ligase 1, mitochondrial (469 aa).

Residues 1–44 (MQLQRLGAPLLKRLVGGCIRQSTAPIMPCVVVSGSGVFLTPVRT) constitute a mitochondrion transit peptide. ATP is bound by residues 59 to 61 (IEI), 86 to 92 (EKVHGTN), Arg111, Glu159, Phe209, and 307 to 309 (KLR). The active-site N6-AMP-lysine intermediate is the Lys87. The tract at residues 450-469 (AAAQSEAIPPLSPAAPTKGE) is disordered.

It belongs to the RNA ligase 2 family. As to quaternary structure, component of the RNA editing complex (editosome), a 1600 kDa complex composed of at least 20 proteins. Interacts with terminal uridylyltransferase MEAT1.

The protein localises to the mitochondrion. The enzyme catalyses ATP + (ribonucleotide)n-3'-hydroxyl + 5'-phospho-(ribonucleotide)m = (ribonucleotide)n+m + AMP + diphosphate.. Its function is as follows. Essential for RNA editing. RNA editing in kinetoplastid mitochondria inserts and deletes uridylates at multiple sites in pre-mRNAs as directed by guide RNAs. The protein is RNA-editing ligase 1, mitochondrial (REL1) of Trypanosoma brucei brucei.